The following is an 896-amino-acid chain: Valine--tRNA ligase (896 aa).

A 'HIGH' region motif is present at residues 43–53 (PNVTGSLHIGH). The 'KMSKS' region motif lies at 545–549 (KMSKS). Residue K548 coordinates ATP. A coiled-coil region spans residues 831–857 (DLDAERARLAKGIAAAEKERDGLAARL).

This sequence belongs to the class-I aminoacyl-tRNA synthetase family. ValS type 1 subfamily. Monomer.

The protein localises to the cytoplasm. It catalyses the reaction tRNA(Val) + L-valine + ATP = L-valyl-tRNA(Val) + AMP + diphosphate. Catalyzes the attachment of valine to tRNA(Val). As ValRS can inadvertently accommodate and process structurally similar amino acids such as threonine, to avoid such errors, it has a 'posttransfer' editing activity that hydrolyzes mischarged Thr-tRNA(Val) in a tRNA-dependent manner. This Rhizorhabdus wittichii (strain DSM 6014 / CCUG 31198 / JCM 15750 / NBRC 105917 / EY 4224 / RW1) (Sphingomonas wittichii) protein is Valine--tRNA ligase.